The following is a 326-amino-acid chain: Protein FAM50 homolog (326 aa).

Positions 76-112 (EISNRDLQVARGASSSTSLAKDSQEAREKEEHVAKHT) are disordered. Residues 97-109 (DSQEAREKEEHVA) are compositionally biased toward basic and acidic residues.

The protein belongs to the FAM50 family.

This is Protein FAM50 homolog from Caenorhabditis briggsae.